The primary structure comprises 392 residues: O-phospho-L-seryl-tRNA:Cys-tRNA synthase 1 (392 aa).

Pyridoxal 5'-phosphate-binding positions include 85–86 (AR), Asn190, and 213–215 (SGH). An N6-(pyridoxal phosphate)lysine modification is found at Lys216.

The protein belongs to the SepCysS family. As to quaternary structure, homodimer. Interacts with SepRS. Requires pyridoxal 5'-phosphate as cofactor.

It carries out the reaction O-phospho-L-seryl-tRNA(Cys) + hydrogen sulfide + H(+) = L-cysteinyl-tRNA(Cys) + phosphate. Functionally, converts O-phospho-L-seryl-tRNA(Cys) (Sep-tRNA(Cys)) to L-cysteinyl-tRNA(Cys) (Cys-tRNA(Cys)). The sequence is that of O-phospho-L-seryl-tRNA:Cys-tRNA synthase 1 from Methanoregula boonei (strain DSM 21154 / JCM 14090 / 6A8).